A 168-amino-acid chain; its full sequence is Phosphopantetheine adenylyltransferase (168 aa).

Position 11 (T11) interacts with substrate. Residues T11–F12 and H19 contribute to the ATP site. Positions 43, 75, and 89 each coordinate substrate. Residues G90–R92, E100, and W125–S131 each bind ATP.

It belongs to the bacterial CoaD family. Homohexamer. Mg(2+) is required as a cofactor.

The protein localises to the cytoplasm. The catalysed reaction is (R)-4'-phosphopantetheine + ATP + H(+) = 3'-dephospho-CoA + diphosphate. Its pathway is cofactor biosynthesis; coenzyme A biosynthesis; CoA from (R)-pantothenate: step 4/5. Reversibly transfers an adenylyl group from ATP to 4'-phosphopantetheine, yielding dephospho-CoA (dPCoA) and pyrophosphate. The polypeptide is Phosphopantetheine adenylyltransferase (Wigglesworthia glossinidia brevipalpis).